A 394-amino-acid polypeptide reads, in one-letter code: Acryloyl-CoA reductase (NADH) (394 aa).

Residues 135 to 144 (FALTEPNAGS) and 170 to 172 (FIS) contribute to the FAD site. S144 is a binding site for substrate. Substrate is bound at residue 254 to 257 (DGAR). FAD contacts are provided by residues R282, Q293, and 350–354 (QIHGG). E377 (proton acceptor) is an active-site residue. G378 is a substrate binding site. Position 379-381 (379-381 (TSE)) interacts with FAD.

As to quaternary structure, heterohexadecamer; tetramer of tetramers. Each tetramer is composed of 2 alpha (AcrC), a beta (AcrA) and a gamma (AcrB) subunit. Requires FAD as cofactor.

It is found in the cytoplasm. It carries out the reaction propanoyl-CoA + NAD(+) = acryloyl-CoA + NADH + H(+). Functionally, probable catalytic subunit of the acryloyl-CoA reductase complex involved in the pathway of L-alanine fermentation. Catalyzes the irreversible NADH-dependent formation of propionyl-CoA from acryloyl-CoA. It can also use 3-buten-2-one as substrate. The sequence is that of Acryloyl-CoA reductase (NADH) (acrC) from Anaerotignum propionicum (Clostridium propionicum).